The sequence spans 96 residues: Large ribosomal subunit protein eL21 (96 aa).

The protein belongs to the eukaryotic ribosomal protein eL21 family.

The protein is Large ribosomal subunit protein eL21 of Methanosphaerula palustris (strain ATCC BAA-1556 / DSM 19958 / E1-9c).